The following is a 325-amino-acid chain: MGGWSIALHGGAGDIPFSLPPERRKPREEGLRHCLQIGVEALKAQKPPLDVVELVVRELENIEHFNAGIGSVLTNSGTVEMEASIMDGNTMKCGAVSGLSTVLNPISLARLVMDKTPHIYLAFQGAQDFAKQQGVETVDSSHLITAENVERLKLAIEANRVQVDYSQYNYPEPVKDDAEKELPLTNGDSQIGTVGCVAVDSHGNLASATSTGGLVNKMVGRIGDTPLIGAGTYANELCAVSATGKGEEIIRATVARDVAALMEFKGLSLKEAADFVIHERTPKGTVGLIAVSAAGEIAMPFNTTGMFRACATEDGYSEIAIWPTT.

Catalysis depends on T193, which acts as the Nucleophile. Substrate-binding positions include 221–224 and 243–246; these read RIGD and TGKG.

This sequence belongs to the Ntn-hydrolase family. As to quaternary structure, heterotetramer of two alpha and two beta chains arranged as a dimer of alpha/beta heterodimers. In terms of processing, cleaved into an alpha and beta chain by autocatalysis; this activates the enzyme. The N-terminal residue of the beta subunit is responsible for the nucleophile hydrolase activity. As to expression, expressed in ripening seeds and developing nodules.

It carries out the reaction Cleavage of a beta-linked Asp residue from the N-terminus of a polypeptide.. In terms of biological role, degrades proteins damaged by L-isoaspartyl residue formation (also known as beta-Asp residues). Also has L-asparaginase activity, which is used to liberate stored nitrogen during seed development. This chain is Isoaspartyl peptidase/L-asparaginase, found in Lupinus luteus (European yellow lupine).